A 120-amino-acid chain; its full sequence is UPF0231 protein KPN78578_01240 (120 aa).

The protein belongs to the UPF0231 family.

The chain is UPF0231 protein KPN78578_01240 from Klebsiella pneumoniae subsp. pneumoniae (strain ATCC 700721 / MGH 78578).